Reading from the N-terminus, the 126-residue chain is Large-conductance mechanosensitive channel (126 aa).

A run of 3 helical transmembrane segments spans residues 14-34 (VIDL…VTSL), 40-60 (MPLL…FTFV), and 67-87 (GLFI…FLFI).

This sequence belongs to the MscL family. As to quaternary structure, homopentamer.

The protein resides in the cell membrane. Its function is as follows. Channel that opens in response to stretch forces in the membrane lipid bilayer. May participate in the regulation of osmotic pressure changes within the cell. The sequence is that of Large-conductance mechanosensitive channel from Bacillus licheniformis (strain ATCC 14580 / DSM 13 / JCM 2505 / CCUG 7422 / NBRC 12200 / NCIMB 9375 / NCTC 10341 / NRRL NRS-1264 / Gibson 46).